The following is a 223-amino-acid chain: ATP-dependent dethiobiotin synthetase BioD (223 aa).

Thr-16 is a Mg(2+) binding site. Lys-37 is a catalytic residue. Ser-41 contacts substrate. Mg(2+) is bound by residues Asp-50 and Glu-111. ATP contacts are provided by residues Asp-50, 111 to 114 (EGAG), 171 to 172 (NQ), 201 to 203 (AHV), and Glu-208.

This sequence belongs to the dethiobiotin synthetase family. As to quaternary structure, homodimer. Mg(2+) serves as cofactor.

It is found in the cytoplasm. The enzyme catalyses (7R,8S)-7,8-diammoniononanoate + CO2 + ATP = (4R,5S)-dethiobiotin + ADP + phosphate + 3 H(+). The protein operates within cofactor biosynthesis; biotin biosynthesis; biotin from 7,8-diaminononanoate: step 1/2. Catalyzes a mechanistically unusual reaction, the ATP-dependent insertion of CO2 between the N7 and N8 nitrogen atoms of 7,8-diaminopelargonic acid (DAPA, also called 7,8-diammoniononanoate) to form a ureido ring. The polypeptide is ATP-dependent dethiobiotin synthetase BioD (Anaeromyxobacter sp. (strain Fw109-5)).